The chain runs to 95 residues: Large ribosomal subunit protein uL23 (95 aa).

This sequence belongs to the universal ribosomal protein uL23 family. Part of the 50S ribosomal subunit. Contacts protein L29, and trigger factor when it is bound to the ribosome.

Functionally, one of the early assembly proteins it binds 23S rRNA. One of the proteins that surrounds the polypeptide exit tunnel on the outside of the ribosome. Forms the main docking site for trigger factor binding to the ribosome. The polypeptide is Large ribosomal subunit protein uL23 (Heliobacterium modesticaldum (strain ATCC 51547 / Ice1)).